Reading from the N-terminus, the 612-residue chain is MPEYRSRTSTAGRNMAGARALWRATGMKDGDFHKPIIAIANSFTQFVPGHVHLKDLGQLVAREIEKVGGVAKEFNTIAVDDGIAMGHDGMLYSLPSREIIADSVEYMANAHCADALVCISNCDKITPGMLMAALRLNIPVVFVSGGPMEAGKTKLSEHKLDLVDAMVIAADESASDEKVAEFERSACPTCGSCSGMFTANSMNCLTEALGLSLPGNGSTLATHADREQLFLRAGRLIVELCHRWYGGEDPTALPRGIATQAAFANAMTLDIAMGGSTNTILHLLAAAQEAEVDFDLTHIDALSRRVPQLCKVAPNTPKYHMEDVHRAGGVYGILGELARGGLLDTGVPTVHSRSLADAIARWDVAVSSDSSVQDFFRAGPAGISTQVAFSQATRWPTLDVDRAEGCIRSVKHAYSAEGGLAVLRGNLAVDGCVVKTAGVDESIHVFEGNARVYESQDAAVAGILADEVKAGDVVVIRYEGPKGGPGMQEMLYPTSYLKSKGLGKQCALLTDGRFSGGTSGLSIGHVSPEAASGGTIGLVEDGDRIRIDIPARRIDLLLDEATLAQRRADADARGWKPRAPRPRKVTSALKAYALLATSADKGAVRNTALLGD.

Residue D81 coordinates Mg(2+). C122 contacts [2Fe-2S] cluster. Positions 123 and 124 each coordinate Mg(2+). Position 124 is an N6-carboxylysine (K124). C193 contacts [2Fe-2S] cluster. Residue E489 participates in Mg(2+) binding. S515 acts as the Proton acceptor in catalysis.

Belongs to the IlvD/Edd family. In terms of assembly, homodimer. It depends on [2Fe-2S] cluster as a cofactor. Requires Mg(2+) as cofactor.

It catalyses the reaction (2R)-2,3-dihydroxy-3-methylbutanoate = 3-methyl-2-oxobutanoate + H2O. The enzyme catalyses (2R,3R)-2,3-dihydroxy-3-methylpentanoate = (S)-3-methyl-2-oxopentanoate + H2O. The protein operates within amino-acid biosynthesis; L-isoleucine biosynthesis; L-isoleucine from 2-oxobutanoate: step 3/4. It functions in the pathway amino-acid biosynthesis; L-valine biosynthesis; L-valine from pyruvate: step 3/4. Its function is as follows. Functions in the biosynthesis of branched-chain amino acids. Catalyzes the dehydration of (2R,3R)-2,3-dihydroxy-3-methylpentanoate (2,3-dihydroxy-3-methylvalerate) into 2-oxo-3-methylpentanoate (2-oxo-3-methylvalerate) and of (2R)-2,3-dihydroxy-3-methylbutanoate (2,3-dihydroxyisovalerate) into 2-oxo-3-methylbutanoate (2-oxoisovalerate), the penultimate precursor to L-isoleucine and L-valine, respectively. The polypeptide is Dihydroxy-acid dehydratase (Stenotrophomonas maltophilia (strain R551-3)).